The sequence spans 584 residues: MAEFILNAADFGVPRDGKTDSTERINQCLSTAVSKGYHTVWFPKGTYLIDATLGGDLNQRFRNAGIIVPGNLEIMMDPECIMKVIPNSSWGYSAFYVGKQENITISGGQIIGERDEHTYASAGIRSTHEWGFGICIEGCSNVVIDDVKISDFTGDGIIVSPRGLKTNQDYRTSEQIIIRRCEVRRSRRNNISITGCDMVTVEECLIEDAGTGNGTAPKFGIDIEGYGEGDVDYEEPINVSIRNNHFVGNVSSSVTNFNGYGILIEGNHSDNTISYGYGTQTVIKGNILRRPEDAAAAPRVGITGLGVSQGKETSDAVIAGNLITGFSTGIDVRGKSVLVTNNKISNFENTGILVYQSSDVKVDGNQIQNGLSETRRSIGLRAVLSDDIAFLNNCLIQVVDGVNVSGGNMIIKDNLLRKFSRGIWIAQGNAVIEGNTLNPDAFEAVPESYSVSVTNNAGAIIKNNTFKEFKNYPIYCSTSAKTSIIGNHLERSPLLVTIYISAGVHEIFDNTISVNRTAGNPIVIYLNGSAGSIISGNTINNLSAGTATAIQTNTSTNSKIIGNRIFKGTINKHSSDTIDGNMIV.

PbH1 repeat units lie at residues 100 to 128 (QENI…RSTH), 139 to 161 (CSNV…IVSP), 173 to 195 (SEQI…SITG), 196 to 225 (CDMV…DIEG), 236 to 266 (PINV…LIEG), 313 to 333 (TSDA…IDVR), 334 to 356 (GKSV…LVYQ), 357 to 382 (SSDV…GLRA), 406 to 427 (GGNM…WIAQ), 456 to 478 (NAGA…YCST), and 529 to 554 (SAGS…QTNT).

This is an uncharacterized protein from Bacillus subtilis (strain 168).